A 277-amino-acid chain; its full sequence is Phosphatidylglycerol--prolipoprotein diacylglyceryl transferase (277 aa).

A run of 4 helical transmembrane segments spans residues 18 to 38 (ISVK…LLLA), 51 to 71 (IIVD…RIYY), 89 to 109 (IWHG…TAII), and 116 to 136 (ISFW…QAIG). Arginine 137 is an a 1,2-diacyl-sn-glycero-3-phospho-(1'-sn-glycerol) binding site. 3 helical membrane passes run 177 to 197 (QPTF…LLII), 205 to 225 (GELF…IEGM), and 235 to 255 (FRVS…IIIY).

This sequence belongs to the Lgt family.

It localises to the cell membrane. The catalysed reaction is L-cysteinyl-[prolipoprotein] + a 1,2-diacyl-sn-glycero-3-phospho-(1'-sn-glycerol) = an S-1,2-diacyl-sn-glyceryl-L-cysteinyl-[prolipoprotein] + sn-glycerol 1-phosphate + H(+). Its pathway is protein modification; lipoprotein biosynthesis (diacylglyceryl transfer). Its function is as follows. Catalyzes the transfer of the diacylglyceryl group from phosphatidylglycerol to the sulfhydryl group of the N-terminal cysteine of a prolipoprotein, the first step in the formation of mature lipoproteins. The chain is Phosphatidylglycerol--prolipoprotein diacylglyceryl transferase from Listeria monocytogenes serotype 4a (strain HCC23).